Here is a 603-residue protein sequence, read N- to C-terminus: MTDVPVSHIRNFSIIAHIDHGKSTLADRLLQLTGTVDPREMKEQFLDNMELERERGITIKLQAARMTYTSRDGETYILNLIDTPGHVDFSYEVSRSLAACEGALLVVDASQGVEAQTLANVYLALEHNLEIIPVLNKIDLPGAEPDRVKAEIEEIIGLDCSQAVLASAKEGIGIEEILESIVHLVPPPRDTVDQPLRALIFDSYYDAYRGVIVYFRVMDGIVRRGDRIRLMASGKEYEIDELGVLAPNQKPVESLHAGEVGYLAAAIKAVGDARVGDTITLAHNPAKEPLPGYTEAKPMVFCGLFPTDADQFEDLREALEKLKLNDASLHYEPETSSAMGFGFRCGFLGLLHMEIIQERLEREYNLDLIITAPSVVYRVTTVKGEVLMIDNPSLLPEPQYREKIEEPYVQLEMITPETYVGTLMELAQSRRGIFKDMRYLTQGRTTLVYEMPLAEIVTDFFDEMKSRSRGYASMEYHLIGYRANDLVKLDILINNDPVDSLAAIVHRDKAYHVGRALVSKLKDLIPRHQFKIPIQAAIGSRVIASESIPALRKDVLAKCYGGDVTRKRKLLEKQKAGKKRMKAIGRVDVPQEAFMAVLRLKNE.

A tr-type G domain is found at 7–189 (SHIRNFSIIA…SIVHLVPPPR (183 aa)). GTP contacts are provided by residues 19–24 (DHGKST) and 136–139 (NKID).

The protein belongs to the TRAFAC class translation factor GTPase superfamily. Classic translation factor GTPase family. LepA subfamily.

Its subcellular location is the cell inner membrane. It catalyses the reaction GTP + H2O = GDP + phosphate + H(+). Functionally, required for accurate and efficient protein synthesis under certain stress conditions. May act as a fidelity factor of the translation reaction, by catalyzing a one-codon backward translocation of tRNAs on improperly translocated ribosomes. Back-translocation proceeds from a post-translocation (POST) complex to a pre-translocation (PRE) complex, thus giving elongation factor G a second chance to translocate the tRNAs correctly. Binds to ribosomes in a GTP-dependent manner. The polypeptide is Elongation factor 4 (Thermosynechococcus vestitus (strain NIES-2133 / IAM M-273 / BP-1)).